A 285-amino-acid polypeptide reads, in one-letter code: Phosphatidylglycerol--prolipoprotein diacylglyceryl transferase (285 aa).

4 helical membrane passes run 30-50 (LEIR…HWHI), 67-87 (LMLW…ILLY), 103-123 (WHGG…VSIV), and 129-149 (VRVM…LFLG). Arginine 150 contacts a 1,2-diacyl-sn-glycero-3-phospho-(1'-sn-glycerol). A run of 3 helical transmembrane segments spans residues 184 to 204 (SQVY…SILA), 213 to 233 (FGVL…AVEF), and 252 to 272 (GQVL…LTVL).

Belongs to the Lgt family.

It is found in the cell inner membrane. It carries out the reaction L-cysteinyl-[prolipoprotein] + a 1,2-diacyl-sn-glycero-3-phospho-(1'-sn-glycerol) = an S-1,2-diacyl-sn-glyceryl-L-cysteinyl-[prolipoprotein] + sn-glycerol 1-phosphate + H(+). It functions in the pathway protein modification; lipoprotein biosynthesis (diacylglyceryl transfer). Catalyzes the transfer of the diacylglyceryl group from phosphatidylglycerol to the sulfhydryl group of the N-terminal cysteine of a prolipoprotein, the first step in the formation of mature lipoproteins. The sequence is that of Phosphatidylglycerol--prolipoprotein diacylglyceryl transferase from Anaplasma marginale (strain Florida).